A 260-amino-acid polypeptide reads, in one-letter code: Indole-3-glycerol phosphate synthase (260 aa).

The protein belongs to the TrpC family.

The enzyme catalyses 1-(2-carboxyphenylamino)-1-deoxy-D-ribulose 5-phosphate + H(+) = (1S,2R)-1-C-(indol-3-yl)glycerol 3-phosphate + CO2 + H2O. It participates in amino-acid biosynthesis; L-tryptophan biosynthesis; L-tryptophan from chorismate: step 4/5. This Lacticaseibacillus paracasei (strain ATCC 334 / BCRC 17002 / CCUG 31169 / CIP 107868 / KCTC 3260 / NRRL B-441) (Lactobacillus paracasei) protein is Indole-3-glycerol phosphate synthase.